A 608-amino-acid chain; its full sequence is Threonine--tRNA ligase (608 aa).

The interval 1–144 is editing domain; that stretch reads MRILLIHSDY…SRTITAEEEE (144 aa). Positions 195-489 are catalytic; the sequence is PHVKLMREKE…ELDEKAPMLP (295 aa). Residues cysteine 286, histidine 338, and histidine 459 each contribute to the Zn(2+) site.

Belongs to the class-II aminoacyl-tRNA synthetase family. In terms of assembly, homodimer. Requires Zn(2+) as cofactor.

The protein resides in the cytoplasm. It catalyses the reaction tRNA(Thr) + L-threonine + ATP = L-threonyl-tRNA(Thr) + AMP + diphosphate + H(+). Its function is as follows. Catalyzes the attachment of threonine to tRNA(Thr) in a two-step reaction: L-threonine is first activated by ATP to form Thr-AMP and then transferred to the acceptor end of tRNA(Thr). Also edits incorrectly charged L-seryl-tRNA(Thr). This is Threonine--tRNA ligase from Methanobrevibacter smithii (strain ATCC 35061 / DSM 861 / OCM 144 / PS).